We begin with the raw amino-acid sequence, 401 residues long: Propionate kinase (401 aa).

N11 and K18 together coordinate ATP. Position 11 (N11) interacts with Mg(2+). R86 serves as a coordination point for substrate. D143 serves as the catalytic Proton donor/acceptor. ATP contacts are provided by residues H175, 203–207 (HLGNG), 278–280 (DLR), and 326–330 (GIGEN).

It belongs to the acetokinase family. TdcD subfamily. In terms of assembly, homodimer. It depends on Mg(2+) as a cofactor.

The catalysed reaction is propanoate + ATP = propanoyl phosphate + ADP. The protein operates within amino-acid degradation; L-threonine degradation via propanoate pathway; propanoate from L-threonine: step 4/4. Catalyzes the conversion of propionyl phosphate and ADP to propionate and ATP. The protein is Propionate kinase of Klebsiella pneumoniae (strain 342).